The chain runs to 436 residues: Tol-Pal system protein TolB (436 aa).

An N-terminal signal peptide occupies residues 1-28 (MEMLRRNFFRLLMVLVAGCGLIASPAKA).

Belongs to the TolB family. The Tol-Pal system is composed of five core proteins: the inner membrane proteins TolA, TolQ and TolR, the periplasmic protein TolB and the outer membrane protein Pal. They form a network linking the inner and outer membranes and the peptidoglycan layer.

It localises to the periplasm. Its function is as follows. Part of the Tol-Pal system, which plays a role in outer membrane invagination during cell division and is important for maintaining outer membrane integrity. In Sinorhizobium medicae (strain WSM419) (Ensifer medicae), this protein is Tol-Pal system protein TolB.